The following is a 211-amino-acid chain: Urease accessory protein UreE (211 aa).

A disordered region spans residues Glu170–Asp211. The span at His176–His196 shows a compositional bias: basic and acidic residues.

This sequence belongs to the UreE family.

It is found in the cytoplasm. In terms of biological role, involved in urease metallocenter assembly. Binds nickel. Probably functions as a nickel donor during metallocenter assembly. In Ralstonia nicotianae (strain ATCC BAA-1114 / GMI1000) (Ralstonia solanacearum), this protein is Urease accessory protein UreE.